The primary structure comprises 273 residues: Oxidized low-density lipoprotein receptor 1 (273 aa).

A disordered region spans residues 1–22 (MTFDDLKIQTVKDQPDEKSNGK). Over 1-36 (MTFDDLKIQTVKDQPDEKSNGKKAKGLQFLYSPWWC) the chain is Cytoplasmic. 2 S-palmitoyl cysteine lipidation sites follow: Cys36 and Cys46. Residues 37–57 (LAAATLGVLCLGLVVTIMVLG) form a helical; Signal-anchor for type II membrane protein membrane-spanning segment. Residues 58 to 150 (MQLSQVSDLL…SAPCPQDWIW (93 aa)) are neck. Over 58–273 (MQLSQVSDLL…CQKKANLRAQ (216 aa)) the chain is Extracellular. The stretch at 64–123 (SDLLTQEQANLTHQKKKLEGQISARQQAEEASQESENELKEMIETLARKLNEKSKEQMEL) forms a coiled coil. N-linked (GlcNAc...) asparagine glycosylation occurs at Asn73. Residue Asn139 is glycosylated (N-linked (GlcNAc...) (complex) asparagine). 3 disulfides stabilise this stretch: Cys144–Cys155, Cys172–Cys264, and Cys243–Cys256. The region spanning 151–265 (HGENCYLFSS…CILAAFSICQ (115 aa)) is the C-type lectin domain.

In terms of assembly, homodimer; disulfide-linked. May form a hexamer composed of 3 homodimers. Interacts with HSP70. (Microbial infection) Binds to the head and beginning of the coiled stalk of N.meningitidis adhesin A (nadA) variant 3; binding can be abrogated by monoclonal antibodies against the specific regions of NadA. Binding occurs in protein microarrays, in solution and when LOX-1 is expressed on the cell surface. In terms of processing, the intrachain disulfide-bonds prevent N-glycosylation at some sites. Post-translationally, N-glycosylated. Expressed at high level in endothelial cells and vascular-rich organs such as placenta, lung, liver and brain, aortic intima, bone marrow, spinal cord and substantia nigra. Also expressed at the surface of dendritic cells. Widely expressed at intermediate and low level.

Its subcellular location is the cell membrane. It localises to the membrane raft. The protein localises to the secreted. In terms of biological role, receptor that mediates the recognition, internalization and degradation of oxidatively modified low density lipoprotein (oxLDL) by vascular endothelial cells. OxLDL is a marker of atherosclerosis that induces vascular endothelial cell activation and dysfunction, resulting in pro-inflammatory responses, pro-oxidative conditions and apoptosis. Its association with oxLDL induces the activation of NF-kappa-B through an increased production of intracellular reactive oxygen and a variety of pro-atherogenic cellular responses including a reduction of nitric oxide (NO) release, monocyte adhesion and apoptosis. In addition to binding oxLDL, it acts as a receptor for the HSP70 protein involved in antigen cross-presentation to naive T-cells in dendritic cells, thereby participating in cell-mediated antigen cross-presentation. Also involved in inflammatory process, by acting as a leukocyte-adhesion molecule at the vascular interface in endotoxin-induced inflammation. Also acts as a receptor for advanced glycation end (AGE) products, activated platelets, monocytes, apoptotic cells and both Gram-negative and Gram-positive bacteria. (Microbial infection) May serve as a receptor for adhesin A variant 3 (nadA) of N.meningitidis. This Homo sapiens (Human) protein is Oxidized low-density lipoprotein receptor 1 (OLR1).